The chain runs to 404 residues: S-adenosylmethionine synthase (404 aa).

ATP is bound at residue histidine 18. Aspartate 20 contacts Mg(2+). Glutamate 46 contacts K(+). L-methionine contacts are provided by glutamate 59 and glutamine 102. Residues 102-112 (QSPDIAQGVDT) form a flexible loop region. Residues 177–179 (DGK), 249–250 (KF), aspartate 258, 264–265 (RK), alanine 281, and lysine 285 contribute to the ATP site. Aspartate 258 provides a ligand contact to L-methionine. Lysine 289 provides a ligand contact to L-methionine.

This sequence belongs to the AdoMet synthase family. In terms of assembly, homotetramer; dimer of dimers. Requires Mg(2+) as cofactor. K(+) is required as a cofactor.

Its subcellular location is the cytoplasm. The catalysed reaction is L-methionine + ATP + H2O = S-adenosyl-L-methionine + phosphate + diphosphate. It functions in the pathway amino-acid biosynthesis; S-adenosyl-L-methionine biosynthesis; S-adenosyl-L-methionine from L-methionine: step 1/1. In terms of biological role, catalyzes the formation of S-adenosylmethionine (AdoMet) from methionine and ATP. The overall synthetic reaction is composed of two sequential steps, AdoMet formation and the subsequent tripolyphosphate hydrolysis which occurs prior to release of AdoMet from the enzyme. The protein is S-adenosylmethionine synthase of Nocardia farcinica (strain IFM 10152).